The chain runs to 322 residues: Cytochrome c biogenesis protein CcsA (322 aa).

A run of 8 helical transmembrane segments spans residues 9–29 (ILTHISFSIVSIVITLHLITL), 44–64 (GMIATFLCLTGLLTTRWIYSG), 71–91 (LYESLIFLSWSFSLIHIVPYF), 98–118 (LTTITASITIFTQGFATSGLL), 143–163 (MILSYAALLCGSLLSVALLVI), 226–246 (VISLGFIFLTIGILSGAVWAN), 253–273 (WSWDPKETWAFITWIVFAIYL), and 287–307 (AIVATLGFLIIWICYFGVNLL).

This sequence belongs to the CcmF/CycK/Ccl1/NrfE/CcsA family. In terms of assembly, may interact with Ccs1.

The protein resides in the plastid. It is found in the chloroplast thylakoid membrane. Its function is as follows. Required during biogenesis of c-type cytochromes (cytochrome c6 and cytochrome f) at the step of heme attachment. The sequence is that of Cytochrome c biogenesis protein CcsA from Helianthus annuus (Common sunflower).